The chain runs to 330 residues: Ketol-acid reductoisomerase (NADP(+)) (330 aa).

Residues 1-181 enclose the KARI N-terminal Rossmann domain; the sequence is MKMYYESDVN…GFTKAGVIET (181 aa). NADP(+)-binding positions include 24 to 27, Arg-47, Ser-52, and 82 to 85; these read YGSQ and DEIQ. Residue His-107 is part of the active site. Position 133 (Gly-133) interacts with NADP(+). The 146-residue stretch at 182 to 327 folds into the KARI C-terminal knotted domain; the sequence is TFKEETETDL…ERLRKACGLQ (146 aa). The Mg(2+) site is built by Asp-190, Glu-194, Glu-226, and Glu-230. Ser-251 serves as a coordination point for substrate.

Belongs to the ketol-acid reductoisomerase family. It depends on Mg(2+) as a cofactor.

The catalysed reaction is (2R)-2,3-dihydroxy-3-methylbutanoate + NADP(+) = (2S)-2-acetolactate + NADPH + H(+). The enzyme catalyses (2R,3R)-2,3-dihydroxy-3-methylpentanoate + NADP(+) = (S)-2-ethyl-2-hydroxy-3-oxobutanoate + NADPH + H(+). It functions in the pathway amino-acid biosynthesis; L-isoleucine biosynthesis; L-isoleucine from 2-oxobutanoate: step 2/4. The protein operates within amino-acid biosynthesis; L-valine biosynthesis; L-valine from pyruvate: step 2/4. In terms of biological role, involved in the biosynthesis of branched-chain amino acids (BCAA). Catalyzes an alkyl-migration followed by a ketol-acid reduction of (S)-2-acetolactate (S2AL) to yield (R)-2,3-dihydroxy-isovalerate. In the isomerase reaction, S2AL is rearranged via a Mg-dependent methyl migration to produce 3-hydroxy-3-methyl-2-ketobutyrate (HMKB). In the reductase reaction, this 2-ketoacid undergoes a metal-dependent reduction by NADPH to yield (R)-2,3-dihydroxy-isovalerate. The sequence is that of Ketol-acid reductoisomerase (NADP(+)) from Methanobrevibacter smithii (strain ATCC 35061 / DSM 861 / OCM 144 / PS).